A 342-amino-acid chain; its full sequence is S-adenosylmethionine:tRNA ribosyltransferase-isomerase (342 aa).

It belongs to the QueA family. Monomer.

The protein resides in the cytoplasm. The catalysed reaction is 7-aminomethyl-7-carbaguanosine(34) in tRNA + S-adenosyl-L-methionine = epoxyqueuosine(34) in tRNA + adenine + L-methionine + 2 H(+). It participates in tRNA modification; tRNA-queuosine biosynthesis. Its function is as follows. Transfers and isomerizes the ribose moiety from AdoMet to the 7-aminomethyl group of 7-deazaguanine (preQ1-tRNA) to give epoxyqueuosine (oQ-tRNA). The protein is S-adenosylmethionine:tRNA ribosyltransferase-isomerase of Campylobacter jejuni (strain RM1221).